Here is an 86-residue protein sequence, read N- to C-terminus: Small ribosomal subunit protein bS16 (86 aa).

The protein belongs to the bacterial ribosomal protein bS16 family.

The chain is Small ribosomal subunit protein bS16 from Borrelia garinii subsp. bavariensis (strain ATCC BAA-2496 / DSM 23469 / PBi) (Borreliella bavariensis).